The following is a 500-amino-acid chain: FAD-linked oxidoreductase easE (500 aa).

Residues 37–220 (QGRIPLFTVG…TRATMRVFPD (184 aa)) form the FAD-binding PCMH-type domain.

It belongs to the oxygen-dependent FAD-linked oxidoreductase family. Requires FAD as cofactor.

The protein operates within alkaloid biosynthesis; ergot alkaloid biosynthesis. Functionally, FAD-linked oxidoreductase; part of the gene cluster that mediates the biosynthesis of fungal ergot alkaloid. DmaW catalyzes the first step of ergot alkaloid biosynthesis by condensing dimethylallyl diphosphate (DMAP) and tryptophan to form 4-dimethylallyl-L-tryptophan. The second step is catalyzed by the methyltransferase easF that methylates 4-dimethylallyl-L-tryptophan in the presence of S-adenosyl-L-methionine, resulting in the formation of 4-dimethylallyl-L-abrine. The catalase easC and the FAD-dependent oxidoreductase easE then transform 4-dimethylallyl-L-abrine to chanoclavine-I which is further oxidized by easD in the presence of NAD(+), resulting in the formation of chanoclavine-I aldehyde. Chanoclavine-I aldehyde is the precursor of ergoamides and ergopeptines in Clavicipitaceae, and clavine-type alcaloids such as fumiclavine in Trichocomaceae. However, the metabolites downstream of chanoclavine-I aldehyde in Arthrodermataceae have not been identified yet. This chain is FAD-linked oxidoreductase easE, found in Arthroderma benhamiae (strain ATCC MYA-4681 / CBS 112371) (Trichophyton mentagrophytes).